The chain runs to 332 residues: L-lactate dehydrogenase A chain (332 aa).

Position 2 is an N-acetylalanine (A2). K5 bears the N6-acetyllysine; alternate mark. At K5 the chain carries N6-succinyllysine; alternate. K14 carries the post-translational modification N6-acetyllysine. A Phosphothreonine modification is found at T18. Residue 29–57 (GAVGMACAISILMKDLADELALVDVIEDK) participates in NAD(+) binding. Residue K57 is modified to N6-acetyllysine; alternate. A Glycyl lysine isopeptide (Lys-Gly) (interchain with G-Cter in SUMO2); alternate cross-link involves residue K57. K81 bears the N6-acetyllysine mark. An NAD(+)-binding site is contributed by R99. Substrate is bound at residue R106. K118 is subject to N6-acetyllysine; alternate. K118 is modified (N6-succinyllysine; alternate). K126 carries the post-translational modification N6-acetyllysine. Substrate is bound by residues N138 and R169. Residue H193 is the Proton acceptor of the active site. N6-acetyllysine is present on residues K224 and K232. A Phosphotyrosine modification is found at Y239. K243 carries the N6-acetyllysine modification. Substrate is bound at residue T248. Phosphothreonine is present on T309. S310 carries the post-translational modification Phosphoserine. K318 carries the post-translational modification N6-acetyllysine; alternate. Residue K318 is modified to N6-succinyllysine; alternate. Position 322 is a phosphothreonine (T322).

The protein belongs to the LDH/MDH superfamily. LDH family. Homotetramer. Interacts with PTEN upstream reading frame protein MP31. ISGylated.

It localises to the cytoplasm. The enzyme catalyses (S)-lactate + NAD(+) = pyruvate + NADH + H(+). It participates in fermentation; pyruvate fermentation to lactate; (S)-lactate from pyruvate: step 1/1. Its function is as follows. Interconverts simultaneously and stereospecifically pyruvate and lactate with concomitant interconversion of NADH and NAD(+). The polypeptide is L-lactate dehydrogenase A chain (LDHA) (Pongo abelii (Sumatran orangutan)).